The primary structure comprises 177 residues: Actinorhodin polyketide dimerase (177 aa).

This sequence to S.pristinaespiralis SnaC.

The protein operates within antibiotic biosynthesis; actinorhodin biosynthesis. The polypeptide is Actinorhodin polyketide dimerase (actVB) (Streptomyces coelicolor (strain ATCC BAA-471 / A3(2) / M145)).